Reading from the N-terminus, the 184-residue chain is ATP synthase subunit b (184 aa).

The chain crosses the membrane as a helical span at residues 24-44; sequence ILVVVVGFALLMFIVIKFIVP.

This sequence belongs to the ATPase B chain family. As to quaternary structure, F-type ATPases have 2 components, F(1) - the catalytic core - and F(0) - the membrane proton channel. F(1) has five subunits: alpha(3), beta(3), gamma(1), delta(1), epsilon(1). F(0) has three main subunits: a(1), b(2) and c(10-14). The alpha and beta chains form an alternating ring which encloses part of the gamma chain. F(1) is attached to F(0) by a central stalk formed by the gamma and epsilon chains, while a peripheral stalk is formed by the delta and b chains.

The protein localises to the cell membrane. F(1)F(0) ATP synthase produces ATP from ADP in the presence of a proton or sodium gradient. F-type ATPases consist of two structural domains, F(1) containing the extramembraneous catalytic core and F(0) containing the membrane proton channel, linked together by a central stalk and a peripheral stalk. During catalysis, ATP synthesis in the catalytic domain of F(1) is coupled via a rotary mechanism of the central stalk subunits to proton translocation. Functionally, component of the F(0) channel, it forms part of the peripheral stalk, linking F(1) to F(0). The chain is ATP synthase subunit b (atpF) from Micrococcus luteus (strain ATCC 4698 / DSM 20030 / JCM 1464 / CCM 169 / CCUG 5858 / IAM 1056 / NBRC 3333 / NCIMB 9278 / NCTC 2665 / VKM Ac-2230) (Micrococcus lysodeikticus).